The primary structure comprises 410 residues: Peptidase T (410 aa).

H79 is a Zn(2+) binding site. The active site involves D81. D142 contacts Zn(2+). The Proton acceptor role is filled by E176. Zn(2+) is bound by residues E177, D199, and H381.

Belongs to the peptidase M20B family. Requires Zn(2+) as cofactor.

It localises to the cytoplasm. It catalyses the reaction Release of the N-terminal residue from a tripeptide.. In terms of biological role, cleaves the N-terminal amino acid of tripeptides. The sequence is that of Peptidase T from Listeria monocytogenes serotype 4b (strain CLIP80459).